We begin with the raw amino-acid sequence, 109 residues long: Large ribosomal subunit protein uL24 (109 aa).

This sequence belongs to the universal ribosomal protein uL24 family. In terms of assembly, part of the 50S ribosomal subunit.

One of two assembly initiator proteins, it binds directly to the 5'-end of the 23S rRNA, where it nucleates assembly of the 50S subunit. Its function is as follows. One of the proteins that surrounds the polypeptide exit tunnel on the outside of the subunit. This chain is Large ribosomal subunit protein uL24, found in Syntrophotalea carbinolica (strain DSM 2380 / NBRC 103641 / GraBd1) (Pelobacter carbinolicus).